A 565-amino-acid chain; its full sequence is Proline--tRNA ligase (565 aa).

The protein belongs to the class-II aminoacyl-tRNA synthetase family. ProS type 1 subfamily. In terms of assembly, homodimer.

Its subcellular location is the cytoplasm. The enzyme catalyses tRNA(Pro) + L-proline + ATP = L-prolyl-tRNA(Pro) + AMP + diphosphate. In terms of biological role, catalyzes the attachment of proline to tRNA(Pro) in a two-step reaction: proline is first activated by ATP to form Pro-AMP and then transferred to the acceptor end of tRNA(Pro). As ProRS can inadvertently accommodate and process non-cognate amino acids such as alanine and cysteine, to avoid such errors it has two additional distinct editing activities against alanine. One activity is designated as 'pretransfer' editing and involves the tRNA(Pro)-independent hydrolysis of activated Ala-AMP. The other activity is designated 'posttransfer' editing and involves deacylation of mischarged Ala-tRNA(Pro). The misacylated Cys-tRNA(Pro) is not edited by ProRS. The sequence is that of Proline--tRNA ligase from Francisella tularensis subsp. tularensis (strain WY96-3418).